The sequence spans 187 residues: Peptidyl-tRNA hydrolase (187 aa).

Position 15 (tyrosine 15) interacts with tRNA. Residue histidine 20 is the Proton acceptor of the active site. TRNA-binding residues include phenylalanine 64, asparagine 66, and asparagine 112.

The protein belongs to the PTH family. As to quaternary structure, monomer.

Its subcellular location is the cytoplasm. It catalyses the reaction an N-acyl-L-alpha-aminoacyl-tRNA + H2O = an N-acyl-L-amino acid + a tRNA + H(+). Its function is as follows. Hydrolyzes ribosome-free peptidyl-tRNAs (with 1 or more amino acids incorporated), which drop off the ribosome during protein synthesis, or as a result of ribosome stalling. Catalyzes the release of premature peptidyl moieties from peptidyl-tRNA molecules trapped in stalled 50S ribosomal subunits, and thus maintains levels of free tRNAs and 50S ribosomes. This chain is Peptidyl-tRNA hydrolase, found in Bacteroides fragilis (strain ATCC 25285 / DSM 2151 / CCUG 4856 / JCM 11019 / LMG 10263 / NCTC 9343 / Onslow / VPI 2553 / EN-2).